The chain runs to 317 residues: Succinate receptor 1 (317 aa).

At 1–27 (MAQNLSCENWLALENILKKYYLSAFYG) the chain is on the extracellular side. Asparagine 4 carries N-linked (GlcNAc...) asparagine glycosylation. A helical membrane pass occupies residues 28–48 (IEFIVGMLGNFTVVFGYLFCM). Residues 49 to 55 (KNWNSSN) lie on the Cytoplasmic side of the membrane. The helical transmembrane segment at 56 to 76 (VYLFNLSISDLAFLCTLPMLI) threads the bilayer. The Extracellular portion of the chain corresponds to 77–99 (RSYATGNWTYGDVLCISNRYVLH). Cysteine 91 and cysteine 168 are joined by a disulfide. A helical transmembrane segment spans residues 100-120 (ANLYTSILFLTFISIDRYLLM). Topologically, residues 121–133 (KFPFREHILQKKE) are cytoplasmic. A helical transmembrane segment spans residues 134-154 (FAILISLAVWVLVTLEVLPML). Residues 155 to 181 (TFITSTPIEKGDSCVDYASSGNPKYSL) lie on the Extracellular side of the membrane. A helical membrane pass occupies residues 182–202 (IYSLCLTLLGFLIPLSVMCFF). Topologically, residues 203–226 (YYKMVVFLKKRSQQQATVLSLNKP) are cytoplasmic. A helical membrane pass occupies residues 227-247 (LRLVVLAVVIFSVLFTPYHIM). The Extracellular segment spans residues 248-276 (RNVRIASRLDSWPQGCSQKAIKCLYILTR). Residues 277–297 (PLAFLNSAVNPIFYFLVGDHF) traverse the membrane as a helical segment. At 298 to 317 (RDMLFSKLRQYFKSLTSFRL) the chain is on the cytoplasmic side.

Belongs to the G-protein coupled receptor 1 family. Expressed in retina.

It is found in the cell membrane. Its function is as follows. G protein-coupled receptor for succinate able to mediate signaling through Gq/GNAQ or Gi/GNAI second messengers depending on the cell type and the processes regulated. Succinate-SUCNR1 signaling serves as a link between metabolic stress, inflammation and energy homeostasisn. In macrophages, plays a range of immune-regulatory roles. During inflammation, succinate-SUCNR1 signaling may act as an anti-inflammatory mediator or boost inflammation depending on the inflammatory status of cells. Hyperpolarizes M2 macrophages versus M1 phenotype through Gq signaling by regulating the transcription of genes involved in immune function. In activated M1 macrophages, plays a pro-inflammatory role in response to LPS. Expressed in dendritic cells, where it is involved in the sensing of immunological danger and enhances immunity. Mediates succinate triggered intracelleular calcium mobilization, induces migratory responses and acts in synergy with Toll-like receptor ligands for the production of proinflammatory cytokines as well as an enhancement of antigen-specific activation of helper T cells. In the small intestine, mediates the activation of tuft cells by dietary succinate and triggers type 2 immunity. In adipocytes, plays an important role in the control of energy metabolism. In response to succinate, controls leptin expression in an AMPK-JNK-CEBPA-dependent as well as circadian clock-regulated manner. In muscle tissue, is expressed in non-muscle cells and coordinates muscle remodeling in response to the succinate produced during exercise training in a paracrine manner. In retina, acts as a mediator of vessel growth during retinal development. In response to succinate, regulates the production of angiogenic factors, including VEGF, by retinal ganglion neurons. The sequence is that of Succinate receptor 1 (Sucnr1) from Rattus norvegicus (Rat).